The sequence spans 383 residues: Putative [LysW]-aminoadipate semialdehyde/glutamate semialdehyde transaminase (383 aa).

Pyridoxal 5'-phosphate-binding positions include 97-98 (GT) and Phe-124. Arg-127 is a substrate binding site. Residue 209–212 (DEVQ) coordinates pyridoxal 5'-phosphate. N6-(pyridoxal phosphate)lysine is present on Lys-238. Substrate is bound at residue Ser-266. A pyridoxal 5'-phosphate-binding site is contributed by Thr-267.

Belongs to the class-III pyridoxal-phosphate-dependent aminotransferase family. LysJ subfamily. In terms of assembly, homodimer. The cofactor is pyridoxal 5'-phosphate.

The protein localises to the cytoplasm. The enzyme catalyses [amino-group carrier protein]-C-terminal-gamma-(L-lysyl)-L-glutamate + 2-oxoglutarate = [amino-group carrier protein]-C-terminal-N-(1-carboxy-5-oxopentan-1-yl)-L-glutamine + L-glutamate. It carries out the reaction [amino-group carrier protein]-C-terminal-gamma-(L-ornithyl)-L-glutamate + 2-oxoglutarate = [amino-group carrier protein]-C-terminal-gamma-(L-glutamyl-5-semialdehyde)-L-glutamate + L-glutamate. The protein operates within amino-acid biosynthesis; L-lysine biosynthesis via AAA pathway; L-lysine from L-alpha-aminoadipate (Thermus route): step 4/5. It participates in amino-acid biosynthesis; L-arginine biosynthesis. Its function is as follows. Involved in both the arginine and lysine biosynthetic pathways. The protein is Putative [LysW]-aminoadipate semialdehyde/glutamate semialdehyde transaminase of Pyrobaculum aerophilum (strain ATCC 51768 / DSM 7523 / JCM 9630 / CIP 104966 / NBRC 100827 / IM2).